A 153-amino-acid chain; its full sequence is Pheromone-binding protein Gp-9 (153 aa).

Positions Met-1–Ala-19 are cleaved as a signal peptide. Intrachain disulfides connect Cys-37-Cys-77, Cys-73-Cys-129, and Cys-118-Cys-138.

Belongs to the PBP/GOBP family. Homodimer.

Its subcellular location is the secreted. In terms of biological role, colony queen number, a major feature of social organization, is associated with worker genotype for Gp-9. Colonies are headed by either a single reproductive queen (monogyne form) or multiple queens (polygyne form). Differences in worker Gp-9 genotypes between social forms may cause differences in workers' abilities to recognize queens and regulate their numbers. In Solenopsis n. sp. (strain JP-2002) (Fire ant), this protein is Pheromone-binding protein Gp-9.